The following is a 304-amino-acid chain: Glycine--tRNA ligase alpha subunit (304 aa).

Belongs to the class-II aminoacyl-tRNA synthetase family. In terms of assembly, tetramer of two alpha and two beta subunits.

Its subcellular location is the cytoplasm. It catalyses the reaction tRNA(Gly) + glycine + ATP = glycyl-tRNA(Gly) + AMP + diphosphate. The polypeptide is Glycine--tRNA ligase alpha subunit (Streptococcus agalactiae serotype Ia (strain ATCC 27591 / A909 / CDC SS700)).